The chain runs to 93 residues: Large ribosomal subunit protein uL23c (93 aa).

Belongs to the universal ribosomal protein uL23 family. As to quaternary structure, part of the 50S ribosomal subunit.

The protein localises to the plastid. Its subcellular location is the chloroplast. Functionally, binds to 23S rRNA. The protein is Large ribosomal subunit protein uL23c (rpl23) of Adiantum capillus-veneris (Maidenhair fern).